The sequence spans 351 residues: Nicotinate-nucleotide--dimethylbenzimidazole phosphoribosyltransferase (351 aa).

Glu-317 serves as the catalytic Proton acceptor.

This sequence belongs to the CobT family.

The catalysed reaction is 5,6-dimethylbenzimidazole + nicotinate beta-D-ribonucleotide = alpha-ribazole 5'-phosphate + nicotinate + H(+). Its pathway is nucleoside biosynthesis; alpha-ribazole biosynthesis; alpha-ribazole from 5,6-dimethylbenzimidazole: step 1/2. Functionally, catalyzes the synthesis of alpha-ribazole-5'-phosphate from nicotinate mononucleotide (NAMN) and 5,6-dimethylbenzimidazole (DMB). This chain is Nicotinate-nucleotide--dimethylbenzimidazole phosphoribosyltransferase, found in Pseudomonas aeruginosa (strain ATCC 15692 / DSM 22644 / CIP 104116 / JCM 14847 / LMG 12228 / 1C / PRS 101 / PAO1).